A 454-amino-acid chain; its full sequence is Bifunctional protein GlmU (454 aa).

A pyrophosphorylase region spans residues 1-232 (MTDRTCLSIV…VDNVIGINNR (232 aa)). Residues 11–14 (LAAG), lysine 25, glutamine 78, and 83–84 (GT) each bind UDP-N-acetyl-alpha-D-glucosamine. Aspartate 108 is a binding site for Mg(2+). 4 residues coordinate UDP-N-acetyl-alpha-D-glucosamine: glycine 144, glutamate 158, asparagine 173, and asparagine 230. Asparagine 230 lines the Mg(2+) pocket. Residues 233–253 (AELAEAETIWQNRKRRELMLS) are linker. Residues 254–454 (GVTLIAPETV…AIKAAKSVSK (201 aa)) form an N-acetyltransferase region. UDP-N-acetyl-alpha-D-glucosamine-binding residues include arginine 319 and lysine 337. The active-site Proton acceptor is the histidine 349. Tyrosine 352 and asparagine 363 together coordinate UDP-N-acetyl-alpha-D-glucosamine. Acetyl-CoA is bound by residues alanine 366, 372–373 (NY), serine 391, serine 409, and arginine 426.

This sequence in the N-terminal section; belongs to the N-acetylglucosamine-1-phosphate uridyltransferase family. It in the C-terminal section; belongs to the transferase hexapeptide repeat family. As to quaternary structure, homotrimer. Mg(2+) is required as a cofactor.

It is found in the cytoplasm. It catalyses the reaction alpha-D-glucosamine 1-phosphate + acetyl-CoA = N-acetyl-alpha-D-glucosamine 1-phosphate + CoA + H(+). The enzyme catalyses N-acetyl-alpha-D-glucosamine 1-phosphate + UTP + H(+) = UDP-N-acetyl-alpha-D-glucosamine + diphosphate. Its pathway is nucleotide-sugar biosynthesis; UDP-N-acetyl-alpha-D-glucosamine biosynthesis; N-acetyl-alpha-D-glucosamine 1-phosphate from alpha-D-glucosamine 6-phosphate (route II): step 2/2. It participates in nucleotide-sugar biosynthesis; UDP-N-acetyl-alpha-D-glucosamine biosynthesis; UDP-N-acetyl-alpha-D-glucosamine from N-acetyl-alpha-D-glucosamine 1-phosphate: step 1/1. It functions in the pathway bacterial outer membrane biogenesis; LPS lipid A biosynthesis. In terms of biological role, catalyzes the last two sequential reactions in the de novo biosynthetic pathway for UDP-N-acetylglucosamine (UDP-GlcNAc). The C-terminal domain catalyzes the transfer of acetyl group from acetyl coenzyme A to glucosamine-1-phosphate (GlcN-1-P) to produce N-acetylglucosamine-1-phosphate (GlcNAc-1-P), which is converted into UDP-GlcNAc by the transfer of uridine 5-monophosphate (from uridine 5-triphosphate), a reaction catalyzed by the N-terminal domain. The protein is Bifunctional protein GlmU of Brucella canis (strain ATCC 23365 / NCTC 10854 / RM-666).